We begin with the raw amino-acid sequence, 506 residues long: Acetaldehyde dehydrogenase 2 (506 aa).

Residue 240-245 (GETTTG) coordinates NAD(+). Active-site residues include glutamate 262 and cysteine 301.

The protein belongs to the aldehyde dehydrogenase family.

It carries out the reaction an aldehyde + NAD(+) + H2O = a carboxylate + NADH + 2 H(+). It participates in alcohol metabolism; ethanol degradation; acetate from ethanol: step 2/2. The protein operates within ketone degradation; acetoin degradation. Involved in the catabolism of acetoin and ethanol. The polypeptide is Acetaldehyde dehydrogenase 2 (acoD) (Cupriavidus necator (strain ATCC 17699 / DSM 428 / KCTC 22496 / NCIMB 10442 / H16 / Stanier 337) (Ralstonia eutropha)).